Here is a 148-residue protein sequence, read N- to C-terminus: Large ribosomal subunit protein uL13 (148 aa).

The protein belongs to the universal ribosomal protein uL13 family. As to quaternary structure, part of the 50S ribosomal subunit.

Its function is as follows. This protein is one of the early assembly proteins of the 50S ribosomal subunit, although it is not seen to bind rRNA by itself. It is important during the early stages of 50S assembly. This chain is Large ribosomal subunit protein uL13, found in Lacticaseibacillus casei (strain BL23) (Lactobacillus casei).